Reading from the N-terminus, the 439-residue chain is Glutamate--tRNA ligase 2 (439 aa).

The 'HIGH' region signature appears at 6–16 (PSPTGDMHIGN). The short motif at 232–236 (KMSKR) is the 'KMSKS' region element. ATP is bound at residue K235.

Belongs to the class-I aminoacyl-tRNA synthetase family. Glutamate--tRNA ligase type 1 subfamily. In terms of assembly, monomer.

The protein localises to the cytoplasm. It catalyses the reaction tRNA(Glu) + L-glutamate + ATP = L-glutamyl-tRNA(Glu) + AMP + diphosphate. Catalyzes the attachment of glutamate to tRNA(Glu) in a two-step reaction: glutamate is first activated by ATP to form Glu-AMP and then transferred to the acceptor end of tRNA(Glu). This chain is Glutamate--tRNA ligase 2, found in Helicobacter pylori (strain HPAG1).